We begin with the raw amino-acid sequence, 347 residues long: Heat-inducible transcription repressor HrcA (347 aa).

It belongs to the HrcA family.

Its function is as follows. Negative regulator of class I heat shock genes (grpE-dnaK-dnaJ and groELS operons). Prevents heat-shock induction of these operons. This Laribacter hongkongensis (strain HLHK9) protein is Heat-inducible transcription repressor HrcA.